The primary structure comprises 601 residues: Elongation factor 4 (601 aa).

Positions 8-189 (EQIRNFGIIA…LIVRKAPPPK (182 aa)) constitute a tr-type G domain. 20–25 (DHGKST) is a GTP binding site.

Belongs to the TRAFAC class translation factor GTPase superfamily. Classic translation factor GTPase family. LepA subfamily.

It localises to the cell membrane. It catalyses the reaction GTP + H2O = GDP + phosphate + H(+). Its function is as follows. Required for accurate and efficient protein synthesis under certain stress conditions. May act as a fidelity factor of the translation reaction, by catalyzing a one-codon backward translocation of tRNAs on improperly translocated ribosomes. Back-translocation proceeds from a post-translocation (POST) complex to a pre-translocation (PRE) complex, thus giving elongation factor G a second chance to translocate the tRNAs correctly. Binds to ribosomes in a GTP-dependent manner. The chain is Elongation factor 4 from Tropheryma whipplei (strain Twist) (Whipple's bacillus).